Here is a 262-residue protein sequence, read N- to C-terminus: Hydroxyethylthiazole kinase (262 aa).

M50 lines the substrate pocket. Residues R125 and T171 each contribute to the ATP site. Residue G198 participates in substrate binding.

It belongs to the Thz kinase family. It depends on Mg(2+) as a cofactor.

It catalyses the reaction 5-(2-hydroxyethyl)-4-methylthiazole + ATP = 4-methyl-5-(2-phosphooxyethyl)-thiazole + ADP + H(+). It functions in the pathway cofactor biosynthesis; thiamine diphosphate biosynthesis; 4-methyl-5-(2-phosphoethyl)-thiazole from 5-(2-hydroxyethyl)-4-methylthiazole: step 1/1. Functionally, catalyzes the phosphorylation of the hydroxyl group of 4-methyl-5-beta-hydroxyethylthiazole (THZ). In Escherichia coli (strain K12 / MC4100 / BW2952), this protein is Hydroxyethylthiazole kinase.